A 62-amino-acid polypeptide reads, in one-letter code: UPF0337 protein mll8179 (62 aa).

Residues 1–42 form a disordered region; it reads MRNMVNKDQVAGLAKQLKGSVKQAAGKATGNRRTQAEGMADK.

This sequence belongs to the UPF0337 (CsbD) family.

The chain is UPF0337 protein mll8179 from Mesorhizobium japonicum (strain LMG 29417 / CECT 9101 / MAFF 303099) (Mesorhizobium loti (strain MAFF 303099)).